A 352-amino-acid polypeptide reads, in one-letter code: Biotin synthase (352 aa).

The Radical SAM core domain occupies 44 to 262; that stretch reads NRVQVSTLLS…LAVARILMPK (219 aa). Residues cysteine 59, cysteine 63, and cysteine 66 each coordinate [4Fe-4S] cluster. Residues cysteine 103, cysteine 134, cysteine 194, and arginine 266 each coordinate [2Fe-2S] cluster.

The protein belongs to the radical SAM superfamily. Biotin synthase family. As to quaternary structure, homodimer. Requires [4Fe-4S] cluster as cofactor. [2Fe-2S] cluster serves as cofactor.

The enzyme catalyses (4R,5S)-dethiobiotin + (sulfur carrier)-SH + 2 reduced [2Fe-2S]-[ferredoxin] + 2 S-adenosyl-L-methionine = (sulfur carrier)-H + biotin + 2 5'-deoxyadenosine + 2 L-methionine + 2 oxidized [2Fe-2S]-[ferredoxin]. It functions in the pathway cofactor biosynthesis; biotin biosynthesis; biotin from 7,8-diaminononanoate: step 2/2. Functionally, catalyzes the conversion of dethiobiotin (DTB) to biotin by the insertion of a sulfur atom into dethiobiotin via a radical-based mechanism. The polypeptide is Biotin synthase (Pseudomonas entomophila (strain L48)).